A 2556-amino-acid polypeptide reads, in one-letter code: MTITTRGSPVGENESQGQTSDGQPQPSFQQNQISSSDSSNETSPTTPPYEQGQGDAPPQHEEEDPSFPHTDLAKLEDMINRSRWVVPVLPKGELEVLLEASIDLTKKGLDVKSEACQRFFRDVLTVSFSKILMDEAVSGWKFEIHRCIINNTHRLVELCVAKLSQDWFPFLELLAIALNPHCKFHVYNGARPCESVSSSVQFPEDELFACSPDLHSPKGWLVDLINTFGTLNGFQILHDRFTSGSALNVQTIAALIKPFGQCYEFLTQHTLRKYFIPVIEVVPQILQKLTNEELKKETKTEVKNDTISMIIKFLKNLASRIPGQEETVKNLETFRLKMILRLLQISSFNGKMNALNEINKVLSSVSYYTHGHGNSEEEWLTVERMTEWIQQNNILSIVLQDSLHQPQYVEKIEKILRFVIKEKALTLQDLNNIWAAQAGKHEAIVKNVHDLLAKLAWNFSPEQLDHLFDCFKASWTNASKKQREKLLELIRRLAEDDKDGVMAHKVLNLLWNLAHSDDVPVDIMDLALSAHIKILDYSCSQDRDTQKIQWIDCFIEEFRTNNKWVIPALKQIKEICSLFGEAPQNLSQTHQSPRVFYRHDLISQLQHNHALVTLVAENLAAYMNSIRLYARDHEDYDPQTVRLGSRYSHVQEVQERLNFLRFLLKDGQLWLCVSQAKQIWNCLAENAVYFSDREACFMWYSKLMGDEPDLHPDINKEFFESNVLQLDPSLLTENGMKCFERFFKTVNCREGKLMIKRKIYMMDDLDLIGLDYLWKVVIQSNDDISSRAIDLLKEIYTSLGPKLQANQVVIHEDFIQSCFDRLKASYDTLCVLDSEKDNIFSCARQEAIRMVRILTVLREYISEYDSDYHEERMILPMSRAFRGKHLSFTVRFPNQGKEVEDLDILSHTNATIGSVRRCILNRMNVNVAHTKIELFIGGELVASEDDRKLVEQLNLKDKSLITAKFIQINSNMPSSPDSSSDSSAGPPGNHSHNNYRDVSNPEMEKCLPGVIMSLQPRYISFLWQVADLGSMLTVPTLRDGARILMKLMPPDSTTLEQLRALCSDHVNLGERRLGQSLHSLFFGSSASQVLYLTEVVYTLLMPAGAPLADISSDFQYHFLKSGGLPLVLSMLIQNNFLPNTDVETRRDAYFSALKIAKLLLTIVGYGHVQAIAEACQPVADGTDPKTPINQVTHDQAVVLQNALQSIPNPSSECMLRNVSVHLAQQISGLASRYIPDICVIRAIQKIIWAAGCGSLELVFSPNEDITETYKMTTSTRSNLEVKDEQVCCEALEVMTLCFALIPTAMDSLNKEKAWQSFVIDLLLYCPSKTVRQLAQEQFFLICTRCCMGHRPLLFFITLLFTILGGAANEKGKHSDVYFTLLRRLLTYAYNSNIQVPNVDVLLNDEIDWLKRVRDYIKNTGETNVEDPILEGHLGVTKELLSFQSPEKKYHIGCKTGGANLVKELIDYFIFPASKAYLQYMRSGELPIKQAIPVCGSPATINAGFELLVALAFGCVRNLKQIVNCLTELFYIGTPVTTCEAVGEWEYLPPVGPRPPKGFVGLKNAGATCYMNSVIQQLYMIPSIRNSILAIDSIWSDTDDDIFKGEKQDSENNVDPRDDVFRYPHQFEDKPTLSKVEDRKEYNIAVLKHLQITFGHLAASQLQYYVPKGFWQQFRLWGEPVNLREQHDALEFFNSLVDSLDEAFKALGYPTVLSKVLGGSFADQKICQGCPHRYECEESFTTLNVDIRNHQNLLDSLEQYVKGDLLEGANAYHCEKCDKKVDTVKRLLIKKLPSVLTIQLKRFDYDWERECAIKFNDYFEFPRELDMEPYTVAGATKLEGDSVNPQTQLIKQNEQSESVIPGSTKYRLVGVLVHSGQANGGHYYSYIIQRNGKDSKRSHWFKFDDGDVTECKMDDDEEMKNQCFGGEYMGEVFDHMMKRMSYRRQKRWWNAYILFYERMDITDEDDEIITYISELTFTRPHQIMSPAIERSVWKQNVQFLHNQMQFSLEYFQFIKKLLTCNAVYLSPAPGQDHLLPEAEDITMISIQLASRFLFTTGFHTKKIIRGPANDWYDALCILLRHSKNVRFWFVHNVLFNVSNRFSEYLLECPSAEIRGTFAKLIVFIAHFSLQDGSSPSPFTSPFANPGPYSQIYDNLSLSDHLLKAVLSLLRREVSEHGRHLQQYFNLFIMYASLGLAEKTQLLKLNVPATFMLVSLDEGPGPPVKYQYAELSKLHSVVSQLIRCCSVSSRMQSSINGNPPLPNPFGDPNLSQPIMPIQQNVADILFMRTTYMKKVIEDCSNSEDTVKLLLFCCWENPQFSCSVLSELLWQVAHSHAYELQPYLDLLLQIILFEDSWQAHRIHNALKGIPNDQDGLFDTIQHSKNHHQKRAYQCIKWMVTLFNSCPVAYQILQGNGDLKNKWTWAMEWLGDELERKPYSGNPQYTYSNWSPPVQSNETANGYFLEKSHSAKMKLTKACDLYPEEDPDDQDALDEHVSHAPQDRTFYLYSHRSHYQQNYVPEQPFSGPASHHLNNPQKNDKPQETHESNEEISSCLIKDQ.

Positions 1-33 (MTITTRGSPVGENESQGQTSDGQPQPSFQQNQI) are enriched in polar residues. Positions 1 to 68 (MTITTRGSPV…QHEEEDPSFP (68 aa)) are disordered. Over residues 34–44 (SSSDSSNETSP) the composition is skewed to low complexity. The residue at position 587 (Ser-587) is a Phosphoserine. Thr-589 bears the Phosphothreonine mark. The disordered stretch occupies residues 971 to 999 (NMPSSPDSSSDSSAGPPGNHSHNNYRDVS). Residues 973–983 (PSSPDSSSDSS) show a composition bias toward low complexity. The 400-residue stretch at 1559–1958 (VGLKNAGATC…NAYILFYERM (400 aa)) folds into the USP domain. Cys-1568 acts as the Nucleophile in catalysis. The Zn(2+) site is built by Cys-1729, His-1731, Cys-1773, and Cys-1776. The active-site Proton acceptor is His-1881. Ser-2447 bears the Phosphoserine mark. Residues 2513 to 2556 (QNYVPEQPFSGPASHHLNNPQKNDKPQETHESNEEISSCLIKDQ) form a disordered region. Residues 2534-2545 (KNDKPQETHESN) show a composition bias toward basic and acidic residues. A Phosphoserine modification is found at Ser-2549.

This sequence belongs to the peptidase C19 family.

The enzyme catalyses Thiol-dependent hydrolysis of ester, thioester, amide, peptide and isopeptide bonds formed by the C-terminal Gly of ubiquitin (a 76-residue protein attached to proteins as an intracellular targeting signal).. It participates in protein modification; protein ubiquitination. Deubiquitinase that mediates deubiquitination of target proteins. May stabilize target proteins that are important for male germ cell development. This is Ubiquitin carboxyl-terminal hydrolase 9Y from Mus musculus (Mouse).